We begin with the raw amino-acid sequence, 124 residues long: Salivary protein 15 Iric-3 (124 aa).

Residues 1 to 22 (MESFVAMKVVCIILLFVIAAEA) form the signal peptide. N-linked (GlcNAc...) asparagine glycosylation is found at N82 and N93. Positions 105 to 124 (GPNNQTCHKKDECVGYIPGC) are CD4-binding.

This sequence belongs to the salp15 family. In terms of assembly, interacts with host CD4. Interacts with host DC-SIGN (CD209). Interacts with Borrelia outer surface protein C (OspC). Expressed in salivary glands. Detected in fed adult female.

Its subcellular location is the secreted. In terms of biological role, salivary tick protein that downregulates host immune system by binding to both dendritic cells, and CD4(+) T cells. Specifically binds to the CD4 coreceptor on T cells. This interaction prevents the activation of the Src kinase, Lck, and its downstream substrate Zap-70, and results in deficient activation of PLCgamma1, the repression of calcium fluxes triggered by T-cell antigen receptor (TCR) ligation, and a subsequent reduction in interleukin-2 production. This salivary protein also binds to DC-SIGN (CD209) on dendritic cells (DC) and activates the Raf-1 kinase/MEK signaling pathway that results in down-regulating expression of pro-inflammatory cytokines. Furthermore, it inhibits T cell proliferation induced by DCs. In addition, it inhibits in vitro keratinocyte inflammation induced by Borrelia burgdorferi or by the major outer surface protein (OspC) of Borrelia. In addition, it downregulates chemokines and monocyte chemoattractant protein 1, as well as several antimicrobial peptides such as defensins, cathelicidin, psoriasin, and RNase 7. Apart from its immunomodulatory activities, it is also associated with protection of Borrelia spirochetes from antibody-mediated killing through its binding to OspC. In vivo, tests on different immune disease animal models show promising therapeutic results, e.g., in inhibiting HIV infection, experimental autoimmune encephalomyelitis, transplantation rejection, and asthma. In Ixodes ricinus (Common tick), this protein is Salivary protein 15 Iric-3.